The primary structure comprises 96 residues: Redox-responsive transcriptional regulator WhiB3 (96 aa).

The 4Fe-4S Wbl-type domain occupies 22-86; it reads LCRGVDSSMF…GGLSESEREL (65 aa). [4Fe-4S] cluster contacts are provided by C23, C53, C56, and C62.

This sequence belongs to the WhiB family. Requires [4Fe-4S] cluster as cofactor. In terms of processing, the Fe-S cluster can be nitrosylated by nitric oxide (NO). Upon Fe-S cluster removal intramolecular disulfide bonds are formed.

Its subcellular location is the cytoplasm. In terms of biological role, a redox-sensitive transcriptional regulator. Maintains intracellular redox homeostasis by regulating catabolic metabolism and polyketide biosynthesis. Regulates expression of the redox buffer ergothioneine (ERG). In concert with myothiol (MSH), another redox buffer, responds to low pH leading to acid resistance. The apo- but not holo-form probably binds DNA. The protein is Redox-responsive transcriptional regulator WhiB3 (whiB3) of Mycolicibacterium smegmatis (strain ATCC 700084 / mc(2)155) (Mycobacterium smegmatis).